A 784-amino-acid polypeptide reads, in one-letter code: Copal-8-ol diphosphate hydratase TPSSA9, chloroplastic (784 aa).

Arg240 contributes to the substrate binding site. Positions 372 and 374 each coordinate Mg(2+). A DXDD motif motif is present at residues 372 to 375 (DIDD). Arg459 provides a ligand contact to substrate.

This sequence belongs to the terpene synthase family.

It localises to the plastid. The protein localises to the chloroplast. It carries out the reaction (2E,6E,10E)-geranylgeranyl diphosphate + H2O = 8-hydroxycopalyl diphosphate. Its pathway is secondary metabolite biosynthesis; terpenoid biosynthesis. Involved in the biosynthesis of labdane-type diterpenoid including sclareol, a diterpene-diol that is used as fragrance and flavoring, and has anticancer effects (able to kill leukemic and colon cancer cells by apoptosis). Sclareol can also be used as synthesis precursor of ambergris substitution fragance products such as ambrox. Terpene synthase that produces 8-hydroxycopalyl diphosphate from geranylgeranyl diphosphate (GGPP). The polypeptide is Copal-8-ol diphosphate hydratase TPSSA9, chloroplastic (Salvia sclarea (Clary sage)).